The chain runs to 118 residues: Protein Rev (118 aa).

Phosphoserine; by host CK2 is present on residues Ser-5 and Ser-8. The interval 18–26 (LIKFLYQSN) is homomultimerization. The segment at 23-46 (YQSNPPPSPEGTRQARRNRRRRWR) is disordered. Residues 34–50 (TRQARRNRRRRWRARQR) carry the Nuclear localization signal and RNA-binding (RRE) motif. A compositionally biased stretch (basic residues) spans 36 to 46 (QARRNRRRRWR). The Nuclear export signal and binding to XPO1 signature appears at 73–84 (LQLPPLERLNLN). Positions 87 to 118 (EDCRTSGTQGVGHPQISVESPTVLESGTEEQC) are disordered. Ser-92 bears the Phosphoserine; by host mark. Residues 103–112 (SVESPTVLES) are compositionally biased toward polar residues.

The protein belongs to the HIV-1 REV protein family. As to quaternary structure, homomultimer; when bound to the RRE. Multimeric assembly is essential for activity and may involve XPO1. Binds to human KPNB1, XPO1, TNPO1, RANBP5 and IPO7. Interacts with the viral Integrase. Interacts with human KHDRBS1. Interacts with human NAP1; this interaction decreases Rev multimerization and stimulates its activity. Interacts with human DEAD-box helicases DDX3 and DDX24; these interactions may serve for viral RNA export to the cytoplasm and packaging, respectively. Interacts with human PSIP1; this interaction may inhibit HIV-1 DNA integration by promoting dissociation of the Integrase-LEDGF/p75 complex. In terms of processing, asymmetrically arginine dimethylated at one site by host PRMT6. Methylation impairs the RNA-binding activity and export of viral RNA from the nucleus to the cytoplasm. Post-translationally, phosphorylated by protein kinase CK2. Presence of, and maybe binding to the N-terminus of the regulatory beta subunit of CK2 is necessary for CK2-mediated Rev's phosphorylation.

Its subcellular location is the host nucleus. The protein resides in the host nucleolus. The protein localises to the host cytoplasm. Its function is as follows. Escorts unspliced or incompletely spliced viral pre-mRNAs (late transcripts) out of the nucleus of infected cells. These pre-mRNAs carry a recognition sequence called Rev responsive element (RRE) located in the env gene, that is not present in fully spliced viral mRNAs (early transcripts). This function is essential since most viral proteins are translated from unspliced or partially spliced pre-mRNAs which cannot exit the nucleus by the pathway used by fully processed cellular mRNAs. Rev itself is translated from a fully spliced mRNA that readily exits the nucleus. Rev's nuclear localization signal (NLS) binds directly to KPNB1/Importin beta-1 without previous binding to KPNA1/Importin alpha-1. KPNB1 binds to the GDP bound form of RAN (Ran-GDP) and targets Rev to the nucleus. In the nucleus, the conversion from Ran-GDP to Ran-GTP dissociates Rev from KPNB1 and allows Rev's binding to the RRE in viral pre-mRNAs. Rev multimerization on the RRE via cooperative assembly exposes its nuclear export signal (NES) to the surface. Rev can then form a complex with XPO1/CRM1 and Ran-GTP, leading to nuclear export of the complex. Conversion from Ran-GTP to Ran-GDP mediates dissociation of the Rev/RRE/XPO1/RAN complex, so that Rev can return to the nucleus for a subsequent round of export. Beside KPNB1, also seems to interact with TNPO1/Transportin-1, RANBP5/IPO5 and IPO7/RANBP7 for nuclear import. The nucleoporin-like HRB/RIP is an essential cofactor that probably indirectly interacts with Rev to release HIV RNAs from the perinuclear region to the cytoplasm. The chain is Protein Rev from Human immunodeficiency virus type 1 group M subtype D (isolate ELI) (HIV-1).